Reading from the N-terminus, the 259-residue chain is Probable dihydroorotate dehydrogenase B (NAD(+)), electron transfer subunit (259 aa).

The FAD-binding FR-type domain occupies 1–89 (MLPLNATIVQ…RGPFGKGFSL (89 aa)). Positions 211, 216, 219, and 229 each coordinate [2Fe-2S] cluster.

Belongs to the PyrK family. In terms of assembly, heterotetramer of 2 PyrK and 2 PyrD type B subunits. Requires [2Fe-2S] cluster as cofactor. FAD is required as a cofactor.

It functions in the pathway pyrimidine metabolism; UMP biosynthesis via de novo pathway; orotate from (S)-dihydroorotate (NAD(+) route): step 1/1. In terms of biological role, responsible for channeling the electrons from the oxidation of dihydroorotate from the FMN redox center in the PyrD type B subunit to the ultimate electron acceptor NAD(+). The sequence is that of Probable dihydroorotate dehydrogenase B (NAD(+)), electron transfer subunit from Methanosarcina barkeri (strain Fusaro / DSM 804).